The primary structure comprises 660 residues: Dual specificity mitogen-activated protein kinase kinase 1 (660 aa).

Residues 1–57 (MNTNTNTNTNISSSGNNIINTPTTNNNNKNNNNNNNNNNNSNNSNNNSSNNNNNNNN) show a composition bias toward low complexity. 3 disordered regions span residues 1–60 (MNTN…NAVG), 105–169 (KGES…FNNL), and 204–229 (NNNYNNYNNNNNSNNNNNNYNNSNNN). Lys105 participates in a covalent cross-link: Glycyl lysine isopeptide (Lys-Gly) (interchain with G-Cter in SUMO). Residues 123-148 (LHSNLNPQLLASPTSSESMDFNQGFY) show a composition bias toward polar residues. The span at 149–169 (NNNNNNNNNNNNNNLNNFNNL) shows a compositional bias: low complexity. One can recognise a Protein kinase domain in the interval 292-641 (LKIIRVLGRG…ASNLLNHEFV (350 aa)). Residues 298–306 (LGRGAGGVV) and Lys321 each bind ATP. Catalysis depends on Asp414, which acts as the Proton acceptor. 2 disordered regions span residues 491-510 (SNLPHQQQQPLQQQQQQQQQ) and 539-573 (NNSNNNIRNSNNNNNNNNNNNNNNNNNNNNNVLDI). Composition is skewed to low complexity over residues 496-510 (QQQQPLQQQQQQQQQ) and 539-569 (NNSNNNIRNSNNNNNNNNNNNNNNNNNNNNN).

The protein belongs to the protein kinase superfamily. STE Ser/Thr protein kinase family. MAP kinase kinase subfamily. Interacts with mip1. Mg(2+) is required as a cofactor. Sumoylated and ubiquitinated in response to chemoattractant stimulation. Sumoylation is linked to kinase activation and results in translocation.

It is found in the cytoplasm. Its subcellular location is the nucleus. It carries out the reaction L-seryl-[protein] + ATP = O-phospho-L-seryl-[protein] + ADP + H(+). The catalysed reaction is L-threonyl-[protein] + ATP = O-phospho-L-threonyl-[protein] + ADP + H(+). The enzyme catalyses L-tyrosyl-[protein] + ATP = O-phospho-L-tyrosyl-[protein] + ADP + H(+). In terms of biological role, required for cAMP-mediated activation of guanylyl cyclase activity and plays an essential role in aggregation, morphogenesis, and chemotaxis. Appears to act upstream of erk1 but not erk2. The protein is Dual specificity mitogen-activated protein kinase kinase 1 of Dictyostelium discoideum (Social amoeba).